A 481-amino-acid chain; its full sequence is Cholesterol 16,22-dihydroxylase CYP90G4 (481 aa).

Residues 4 to 24 (SYLSFFVLSSILVLTLIFFFM) traverse the membrane as a helical segment. Cys426 contacts heme.

This sequence belongs to the cytochrome P450 family. In terms of tissue distribution, mainly expressed in leaves and seed pods and, at low levels, in flowers and stems.

It localises to the membrane. It participates in steroid metabolism; cholesterol metabolism. Involved in the biosynthesis of spiroketal steroid and saponin natural products from cholesterol such as diosgenin and analogs (e.g. furostanol and spirostanol), plant defense compounds used as main precursors for the industrial production of steroid hormones. During the 5,6-spiroketalization of cholesterol, catalyzes the hydroxylation of cholesterol to form 16S,22S-dihydroxycholesterol and, possibly, the subsequent conversion of 16S,22S-dihydroxycholesterol into 16-oxo-22-hydroxy-cholesterol and 16-hydroxy-22-oxo-cholesterol. 16-hydroxy-22-oxo-cholesterol submit a spontaneous reaction leading to the production of furostanol-type steroid diastereomers, precursors of diosgenin. The protein is Cholesterol 16,22-dihydroxylase CYP90G4 of Trigonella foenum-graecum (Fenugreek).